Consider the following 172-residue polypeptide: RNA pyrophosphohydrolase (172 aa).

Residues 8-153 enclose the Nudix hydrolase domain; the sequence is QHRPNVGVVL…KRGVYEAVVA (146 aa). The short motif at 43–64 is the Nudix box element; that stretch reads GGVDEGEDLEVAARRELAEETG.

The protein belongs to the Nudix hydrolase family. RppH subfamily. A divalent metal cation serves as cofactor.

Its function is as follows. Accelerates the degradation of transcripts by removing pyrophosphate from the 5'-end of triphosphorylated RNA, leading to a more labile monophosphorylated state that can stimulate subsequent ribonuclease cleavage. The polypeptide is RNA pyrophosphohydrolase (Caulobacter vibrioides (strain ATCC 19089 / CIP 103742 / CB 15) (Caulobacter crescentus)).